A 552-amino-acid polypeptide reads, in one-letter code: Hyaluronan synthase 2 (552 aa).

The Cytoplasmic portion of the chain corresponds to 1–11; the sequence is MYCERFICILR. The helical transmembrane segment at 12 to 32 threads the bilayer; that stretch reads ILGTTLFGVSLLLGITAAYIV. Over 33–45 the chain is Extracellular; sequence GYQFIQTDNYYFS. A helical membrane pass occupies residues 46–66; the sequence is FGLYGAILASHLIIQSLFAYL. The Cytoplasmic segment spans residues 67–374; the sequence is EHRKMKRSLE…NAMWFHKHHL (308 aa). Residues 375–395 traverse the membrane as a helical segment; it reads WMTYEAVITGFFPFFLIATVI. Over 396–402 the chain is Extracellular; that stretch reads QLFYRGK. Residues 403–423 form a helical membrane-spanning segment; that stretch reads IWNILLFLLTVQLVGLIKSSF. Residues 424–429 lie on the Cytoplasmic side of the membrane; sequence ASFLRG. Residues 430-450 form a helical membrane-spanning segment; the sequence is NIVMVFMSLYSVLYMSSLLPA. Residues 451-475 lie on the Extracellular side of the membrane; it reads KMFAIATINKAGWGTSGRKTIVVNF. A helical transmembrane segment spans residues 476 to 496; the sequence is IGLIPVSIWFTILLGRVIFTI. Residues 497–510 are Cytoplasmic-facing; that stretch reads YKESKKPFSESKTT. The chain crosses the membrane as a helical span at residues 511–531; sequence VLVIGTILYACYWVLLLTLYL. At 532 to 552 the chain is on the extracellular side; that stretch reads VLITKCGRRKKEQHYDMVLDV.

Belongs to the NodC/HAS family. As to quaternary structure, homodimer; dimerization promotes enzymatic activity. Mg(2+) is required as a cofactor.

It is found in the cell membrane. The protein localises to the endoplasmic reticulum membrane. It localises to the vesicle. The protein resides in the golgi apparatus membrane. Its subcellular location is the lysosome. It carries out the reaction [hyaluronan](n) + UDP-N-acetyl-alpha-D-glucosamine = N-acetyl-beta-D-glucosaminyl-(1-&gt;4)-[hyaluronan](n) + UDP + H(+). It catalyses the reaction N-acetyl-beta-D-glucosaminyl-(1-&gt;4)-[hyaluronan](n) + UDP-alpha-D-glucuronate = [hyaluronan](n+1) + UDP + H(+). It functions in the pathway glycan biosynthesis; hyaluronan biosynthesis. Its function is as follows. Catalyzes the addition of GlcNAc or GlcUA monosaccharides to the nascent hyaluronan polymer. Therefore, it is essential to hyaluronan synthesis a major component of most extracellular matrices that has a structural role in tissues architectures and regulates cell adhesion, migration and differentiation. This is one of three isoenzymes responsible for cellular hyaluronan synthesis and it is particularly responsible for the synthesis of high molecular mass hyaluronan. This Gallus gallus (Chicken) protein is Hyaluronan synthase 2 (HAS2).